The sequence spans 434 residues: 3-phosphoshikimate 1-carboxyvinyltransferase (434 aa).

3 residues coordinate 3-phosphoshikimate: Lys-22, Ser-23, and Arg-27. Lys-22 is a binding site for phosphoenolpyruvate. Residues Gly-93 and Arg-121 each coordinate phosphoenolpyruvate. 6 residues coordinate 3-phosphoshikimate: Ser-168, Ser-169, Gln-170, Ser-199, Asp-320, and Lys-347. Residue Gln-170 participates in phosphoenolpyruvate binding. Asp-320 functions as the Proton acceptor in the catalytic mechanism. Phosphoenolpyruvate is bound by residues Arg-351, Arg-395, and Lys-420.

Belongs to the EPSP synthase family. In terms of assembly, monomer.

The protein localises to the cytoplasm. The catalysed reaction is 3-phosphoshikimate + phosphoenolpyruvate = 5-O-(1-carboxyvinyl)-3-phosphoshikimate + phosphate. It functions in the pathway metabolic intermediate biosynthesis; chorismate biosynthesis; chorismate from D-erythrose 4-phosphate and phosphoenolpyruvate: step 6/7. Functionally, catalyzes the transfer of the enolpyruvyl moiety of phosphoenolpyruvate (PEP) to the 5-hydroxyl of shikimate-3-phosphate (S3P) to produce enolpyruvyl shikimate-3-phosphate and inorganic phosphate. This is 3-phosphoshikimate 1-carboxyvinyltransferase from Cupriavidus necator (strain ATCC 17699 / DSM 428 / KCTC 22496 / NCIMB 10442 / H16 / Stanier 337) (Ralstonia eutropha).